The sequence spans 954 residues: Zinc finger protein 618 (954 aa).

Methionine 1 is subject to N-acetylmethionine. Residues 1–19 (MNQPGGAAAPQADGASAAG) are compositionally biased toward low complexity. The segment at 1–56 (MNQPGGAAAPQADGASAAGRKSTASRERLKRSQKSTKVEGPEPVPAEASLSAEQGT) is disordered. Glycyl lysine isopeptide (Lys-Gly) (interchain with G-Cter in SUMO2) cross-links involve residues lysine 63 and lysine 81. C2H2-type zinc fingers lie at residues 147–169 (YECG…VRAH) and 188–210 (YTCD…RDLH). Lysine 239 is covalently cross-linked (Glycyl lysine isopeptide (Lys-Gly) (interchain with G-Cter in SUMO2)). Residues 256-278 (YTCEFCGKQYKYYTPYQEHVALH) form a C2H2-type 3 zinc finger. 2 disordered regions span residues 282-307 (STAP…VSPS) and 337-390 (RTPP…NSSE). Residues 340 to 357 (PATQTQTFRTPNSGSPAS) are compositionally biased toward polar residues. Residues 366-380 (FSRRVEGKAQNHFEE) are compositionally biased toward basic and acidic residues. The C2H2-type 4 zinc finger occupies 392 to 414 (YTCGACGIQFQFYNNLLEHMQSH). The interval 421–463 (NIASNQSRSPPAVVEEKWKPQAQRNSANNTTTSGLTPNSMIPE) is disordered. Lysine 437 participates in a covalent cross-link: Glycyl lysine isopeptide (Lys-Gly) (interchain with G-Cter in SUMO2). A compositionally biased stretch (polar residues) spans 442 to 459 (AQRNSANNTTTSGLTPNS).

This sequence belongs to the krueppel C2H2-type zinc-finger protein family. As to quaternary structure, interacts with UHRF2.

Its subcellular location is the nucleus. It is found in the chromosome. Its function is as follows. Regulates UHRF2 function as a specific 5-hydroxymethylcytosine (5hmC) reader by regulating its chromatin localization. The protein is Zinc finger protein 618 (ZNF618) of Homo sapiens (Human).